Consider the following 115-residue polypeptide: MQRISSLIHLSLFWAGVMSAIELVPEHQTVPVSIGVPATLRCSMKGEAIGNYYINWYRKTQGNTMTFIYREKDIYGPGFKDNFQGDIDIAKNLAVLKILAPSERDEGSYYCACDT.

Residues methionine 1–serine 19 form the signal peptide. Positions proline 25–threonine 115 constitute an Ig-like domain. Cysteine 42 and cysteine 111 form a disulfide bridge.

In terms of assembly, gamma-delta TR is a heterodimer composed of a gamma and delta chain; disulfide-linked. The gamma-delta TR is associated with the transmembrane signaling CD3 coreceptor proteins following the stoichiometry: a single gamma-delta TR heterodimer associates with one CD3D-CD3E heterodimer, one CD3G-CD3E heterodimer and one CD247 homodimer forming a stable octameric structure. Upon activation, gamma-delta TR complex associates with FCER1G to initiate intracellular signaling.

It localises to the cell membrane. Its function is as follows. V region of the variable domain of T cell receptor (TR) delta chain that participates in the antigen recognition. Gamma-delta TRs recognize a variety of self and foreign non-peptide antigens frequently expressed at the epithelial boundaries between the host and external environment, including endogenous lipids presented by MH-like protein CD1D and phosphoantigens presented by butyrophilin-like molecule BTN3A1. Upon antigen recognition induces rapid, innate-like immune responses involved in pathogen clearance and tissue repair. Binding of gamma-delta TR complex to antigen triggers phosphorylation of immunoreceptor tyrosine-based activation motifs (ITAMs) in the CD3 chains by the LCK and FYN kinases, allowing the recruitment, phosphorylation, and activation of ZAP70 that facilitates phosphorylation of the scaffolding proteins LCP2 and LAT. This lead to the formation of a supramolecular signalosome that recruits the phospholipase PLCG1, resulting in calcium mobilization and ERK activation, ultimately leading to T cell expansion and differentiation into effector cells. Gamma-delta TRs are produced through somatic rearrangement of a limited repertoire of variable (V), diversity (D), and joining (J) genes. The potential diversity of gamma-delta TRs is conferred by the unique ability to rearrange (D) genes in tandem and to utilize all three reading frames. The combinatorial diversity is considerably increased by the sequence exonuclease trimming and random nucleotide (N) region additions which occur during the V-(D)-J rearrangements. This Homo sapiens (Human) protein is T cell receptor delta variable 2.